Here is a 132-residue protein sequence, read N- to C-terminus: MNDTVTVRTRKFMTNRLLQRKQMVVDVLHPGKATVPKTEIREKLAKMYKTTPDVVFVFGFRTQFGGGKTTGFAMVYDSLDYAKKNEPKHRLARHGLFEKKKTSRKQRKERKNRMKKVRGTKKASVGASKKKD.

The segment covering 90-100 (RLARHGLFEKK) has biased composition (basic and acidic residues). The segment at 90–132 (RLARHGLFEKKKTSRKQRKERKNRMKKVRGTKKASVGASKKKD) is disordered. The segment covering 101–121 (KTSRKQRKERKNRMKKVRGTK) has biased composition (basic residues).

This sequence belongs to the eukaryotic ribosomal protein eS24 family. Component of the small ribosomal subunit.

Its subcellular location is the cytoplasm. Its function is as follows. Component of the small ribosomal subunit. The ribosome is a large ribonucleoprotein complex responsible for the synthesis of proteins in the cell. Required for processing of pre-rRNA and maturation of 40S ribosomal subunits. This Takifugu rubripes (Japanese pufferfish) protein is Small ribosomal subunit protein eS24 (rps24).